Consider the following 457-residue polypeptide: Phosphoglucosamine mutase (457 aa).

Residue Ser106 is the Phosphoserine intermediate of the active site. The Mg(2+) site is built by Ser106, Asp245, Asp247, and Asp249. At Ser106 the chain carries Phosphoserine.

The protein belongs to the phosphohexose mutase family. It depends on Mg(2+) as a cofactor. In terms of processing, activated by phosphorylation.

The catalysed reaction is alpha-D-glucosamine 1-phosphate = D-glucosamine 6-phosphate. In terms of biological role, catalyzes the conversion of glucosamine-6-phosphate to glucosamine-1-phosphate. The chain is Phosphoglucosamine mutase from Methylibium petroleiphilum (strain ATCC BAA-1232 / LMG 22953 / PM1).